A 463-amino-acid chain; its full sequence is Eukaryotic translation initiation factor 3 subunit E (463 aa).

The PCI domain occupies 224 to 407 (FNLGENQGCQ…NMLHITRPHA (184 aa)). The disordered stretch occupies residues 432–463 (QSSVGEPRERGERGERGNKGGRGRPRTQEVAA). The segment covering 437-449 (EPRERGERGERGN) has biased composition (basic and acidic residues).

Belongs to the eIF-3 subunit E family. In terms of assembly, component of the eukaryotic translation initiation factor 3 (eIF-3) complex.

The protein localises to the cytoplasm. Component of the eukaryotic translation initiation factor 3 (eIF-3) complex, which is involved in protein synthesis of a specialized repertoire of mRNAs and, together with other initiation factors, stimulates binding of mRNA and methionyl-tRNAi to the 40S ribosome. The eIF-3 complex specifically targets and initiates translation of a subset of mRNAs involved in cell proliferation. This chain is Eukaryotic translation initiation factor 3 subunit E, found in Cryptococcus neoformans var. neoformans serotype D (strain JEC21 / ATCC MYA-565) (Filobasidiella neoformans).